The primary structure comprises 316 residues: Small ribosomal subunit protein RACK1 (316 aa).

7 WD repeats span residues 13–44 (GHNG…IIWN), 61–91 (GHSH…RLWE), 103–133 (GHTN…KLWN), 146–178 (GHTE…KVWE), 190–220 (GHTG…MLWD), 231–260 (NAND…IIFD), and 281–311 (SREP…RAWG).

The protein belongs to the WD repeat G protein beta family. Ribosomal protein RACK1 subfamily. In terms of assembly, component of the small ribosomal subunit (SSU). Mature N.crassa ribosomes consist of a small (40S) and a large (60S) subunit. The 40S small subunit contains 1 molecule of ribosomal RNA (18S rRNA) and at least 32 different proteins. The large 60S subunit contains 3 rRNA molecules (26S, 5.8S and 5S rRNA) and at least 42 different proteins.

Its subcellular location is the cytoplasm. Its function is as follows. Component of the ribosome, a large ribonucleoprotein complex responsible for the synthesis of proteins in the cell. The small ribosomal subunit (SSU) binds messenger RNAs (mRNAs) and translates the encoded message by selecting cognate aminoacyl-transfer RNA (tRNA) molecules. The large subunit (LSU) contains the ribosomal catalytic site termed the peptidyl transferase center (PTC), which catalyzes the formation of peptide bonds, thereby polymerizing the amino acids delivered by tRNAs into a polypeptide chain. The nascent polypeptides leave the ribosome through a tunnel in the LSU and interact with protein factors that function in enzymatic processing, targeting, and the membrane insertion of nascent chains at the exit of the ribosomal tunnel. Required to activate general amino acid control under conditions of amino acid limitation in the vegetative growth phase, and for formation of protoperithecia in preparation for the sexual phase of the life cycle of N.crassa. The polypeptide is Small ribosomal subunit protein RACK1 (cpc-2) (Neurospora crassa (strain ATCC 24698 / 74-OR23-1A / CBS 708.71 / DSM 1257 / FGSC 987)).